An 855-amino-acid chain; its full sequence is Potassium transporter 13 (855 aa).

The interval 1–67 is disordered; the sequence is MFHVEEESSG…EMDSDEEDDN (67 aa). Residues 1 to 105 are Cytoplasmic-facing; that stretch reads MFHVEEESSG…EIEDTGIGKK (105 aa). The segment covering 36 to 51 has biased composition (acidic residues); it reads EKDDYEVNEDYDDDGY. The helical transmembrane segment at 106 to 126 threads the bilayer; that stretch reads LILALQTLGVVFGDIGTSPLY. Over 127–142 the chain is Extracellular; that stretch reads TFTVMFRRSPINDKED. The helical transmembrane segment at 143-163 threads the bilayer; sequence IIGALSLVIYTLILIPLVKYV. Residues 164 to 233 are Cytoplasmic-facing; sequence HFVLWANDDG…RLEASMALKK (70 aa). A helical transmembrane segment spans residues 234–254; it reads LLLILVLAGTAMVIADAVVTP. Over 255–268 the chain is Extracellular; sequence AMSVMSAIGGLKVG. A helical transmembrane segment spans residues 269–289; it reads VGVIEQDQVVVISVSFLVILF. Over 290–298 the chain is Cytoplasmic; the sequence is SVQKYGTSK. A helical membrane pass occupies residues 299–319; the sequence is LGLVLGPALLLWFFCLAGIGI. Over 320–346 the chain is Extracellular; the sequence is YNLVKYDSSVFKAFNPAYIYFFFKRNS. Residues 347–367 traverse the membrane as a helical segment; it reads VNAWYALGGCVLCATGSEAMF. The Cytoplasmic segment spans residues 368-379; sequence ADLSYFSVHSIQ. The helical transmembrane segment at 380 to 400 threads the bilayer; the sequence is LTFILLVLPCLLLGYLGQAAY. Over 401–415 the chain is Extracellular; sequence LSENFSAAGDAFFSS. The N-linked (GlcNAc...) asparagine glycan is linked to Asn-404. A helical membrane pass occupies residues 416-436; the sequence is VPSSLFWPVFLISNVAALIAS. The Cytoplasmic portion of the chain corresponds to 437-467; sequence RAMTTATFTCIKQSIALGCFPRLKIIHTSKK. Residues 468 to 488 traverse the membrane as a helical segment; sequence FIGQIYIPVLNWSLLVVCLIV. Residues 489 to 503 lie on the Extracellular side of the membrane; sequence VCSTSNIFAIGNAYG. Residues 504–524 form a helical membrane-spanning segment; the sequence is IAELGIMMTTTILVTLIMLLI. The Cytoplasmic segment spans residues 525 to 528; it reads WQTN. The helical transmembrane segment at 529–549 threads the bilayer; it reads IIVVSMFAIVSLIVELVFFSS. Residues 550–553 are Extracellular-facing; the sequence is VCSS. A helical membrane pass occupies residues 554–574; that stretch reads VADGSWIILVFATIMFLIMFV. The Cytoplasmic segment spans residues 575–855; the sequence is WNYGSKLKYE…LMQVGMTYMV (281 aa). Ser-766 is subject to Phosphoserine.

The protein belongs to the HAK/KUP transporter (TC 2.A.72.3) family.

The protein localises to the cell membrane. Its function is as follows. Probable potassium transporter. The chain is Potassium transporter 13 (POT13) from Arabidopsis thaliana (Mouse-ear cress).